A 496-amino-acid chain; its full sequence is MLO-like protein 15 (496 aa).

The Extracellular segment spans residues 1 to 9 (MAGGGTTLE). The helical transmembrane segment at 10–30 (YTPTWVVALVCSVIVSISFAV) threads the bilayer. Residues 31–59 (ERLIHRAGKHFKNNDQKQLFGALQKIKEE) are Cytoplasmic-facing. A helical membrane pass occupies residues 60-80 (LMLVGFISLLLSVGQSKIAKI). Residues 81–147 (CISKELSEKF…MSLSALHELH (67 aa)) lie on the Extracellular side of the membrane. A helical membrane pass occupies residues 148-168 (IFIFVLAVAHIIFCLLTIVFG). The Cytoplasmic segment spans residues 169-269 (TMKIKQWKKW…KYLMRALNSD (101 aa)). Residues 270-290 (FKKVVGISWYLWVFVVLFLLL) form a helical membrane-spanning segment. Position 291 (N291) is a topological domain, extracellular. Residues 292 to 312 (IVAWHVYFWLAFIPLILLLAV) form a helical membrane-spanning segment. The Cytoplasmic portion of the chain corresponds to 313-355 (GTKLEHIITDLAHEVAEKHIAVEGDLVVRPSDDLFWFQSPRLV). A helical membrane pass occupies residues 356 to 376 (LFLIHFILFQNSFEIAYFFFI). The Extracellular portion of the chain corresponds to 377 to 397 (LFQFGWDSCIMDHVKFVIPRL). A helical membrane pass occupies residues 398 to 418 (VIGVIIQLLCSYSTLPLYALV). At 419–496 (TQMGSSFKGA…KEKSEIAHHD (78 aa)) the chain is on the cytoplasmic side. The segment at 432–453 (EQTQEHLVGWAKMAKRGVKKGA) is calmodulin-binding. The segment at 454-496 (TQVGTSHDATSPRPSIQLNSLLGKGSSQQNQNPKEKSEIAHHD) is disordered. A compositionally biased stretch (polar residues) spans 455–485 (QVGTSHDATSPRPSIQLNSLLGKGSSQQNQN). Residues 486–496 (PKEKSEIAHHD) are compositionally biased toward basic and acidic residues.

The protein belongs to the MLO family.

It localises to the membrane. Its function is as follows. May be involved in modulation of pathogen defense and leaf cell death. Activity seems to be regulated by Ca(2+)-dependent calmodulin binding and seems not to require heterotrimeric G proteins. This is MLO-like protein 15 (MLO15) from Arabidopsis thaliana (Mouse-ear cress).